We begin with the raw amino-acid sequence, 315 residues long: Acetyl-coenzyme A carboxylase carboxyl transferase subunit alpha (315 aa).

The region spanning 35–289 (KLSKKRFELM…RKAVAAELKI (255 aa)) is the CoA carboxyltransferase C-terminal domain.

This sequence belongs to the AccA family. Acetyl-CoA carboxylase is a heterohexamer composed of biotin carboxyl carrier protein (AccB), biotin carboxylase (AccC) and two subunits each of ACCase subunit alpha (AccA) and ACCase subunit beta (AccD).

It is found in the cytoplasm. It catalyses the reaction N(6)-carboxybiotinyl-L-lysyl-[protein] + acetyl-CoA = N(6)-biotinyl-L-lysyl-[protein] + malonyl-CoA. It functions in the pathway lipid metabolism; malonyl-CoA biosynthesis; malonyl-CoA from acetyl-CoA: step 1/1. Functionally, component of the acetyl coenzyme A carboxylase (ACC) complex. First, biotin carboxylase catalyzes the carboxylation of biotin on its carrier protein (BCCP) and then the CO(2) group is transferred by the carboxyltransferase to acetyl-CoA to form malonyl-CoA. The polypeptide is Acetyl-coenzyme A carboxylase carboxyl transferase subunit alpha (Francisella tularensis subsp. mediasiatica (strain FSC147)).